A 358-amino-acid polypeptide reads, in one-letter code: Chorismate synthase (358 aa).

An NADP(+)-binding site is contributed by arginine 47. FMN is bound by residues 124–126 (RSS), 240–241 (NA), glycine 284, 299–303 (KPVAT), and arginine 325.

Belongs to the chorismate synthase family. In terms of assembly, homotetramer. FMNH2 serves as cofactor.

The enzyme catalyses 5-O-(1-carboxyvinyl)-3-phosphoshikimate = chorismate + phosphate. Its pathway is metabolic intermediate biosynthesis; chorismate biosynthesis; chorismate from D-erythrose 4-phosphate and phosphoenolpyruvate: step 7/7. Its function is as follows. Catalyzes the anti-1,4-elimination of the C-3 phosphate and the C-6 proR hydrogen from 5-enolpyruvylshikimate-3-phosphate (EPSP) to yield chorismate, which is the branch point compound that serves as the starting substrate for the three terminal pathways of aromatic amino acid biosynthesis. This reaction introduces a second double bond into the aromatic ring system. In Bacteroides fragilis (strain YCH46), this protein is Chorismate synthase.